We begin with the raw amino-acid sequence, 53 residues long: uncharacterized protein (53 aa).

This is an uncharacterized protein from Dictyostelium discoideum (Social amoeba).